A 215-amino-acid polypeptide reads, in one-letter code: Deoxyadenosine kinase (215 aa).

An ATP-binding site is contributed by 9–17; that stretch reads GPIGAGKSS. The substrate site is built by Glu33, Tyr45, and Asn56. The active-site Proton acceptor is Asp79. Residues Arg80, Asp85, and Glu150 each coordinate substrate.

Belongs to the DCK/DGK family. As to quaternary structure, heterodimer of a deoxyadenosine (DAK) and a deoxyguanosine kinase (DGK).

The enzyme catalyses 2'-deoxyadenosine + ATP = dAMP + ADP + H(+). In terms of biological role, DGK/DAK plays an essential role in generating the deoxyribonucleotide precursors, dGTP and dATP, for DNA metabolism. In Lactobacillus acidophilus (strain ATCC 700396 / NCK56 / N2 / NCFM), this protein is Deoxyadenosine kinase.